A 420-amino-acid chain; its full sequence is MKVEWYLDFVDLDYTPGRDELIVEYYFEPNGVSPEEAAGRIASESSIGTWTTLWKMPEMAKRSMAKVFYLEKSGEGYIAKIAYPLTLFEEGSIVQLLSAIAGNIFGMKALKNLRLLDFHPPYEYLRHFKGPQYGVKGIREFMGVKERPLTATVPKPKMGWSVDEYAEIAYELWSGGIDLLKDDENFTSFPFNRFEERVKKLYRIRDIVEAETEERKEYLINITGSVDVMEKRAELVANEGGQYVMIDIIVTGWSALQYMREVTEDLGLAIHAHRAMHAAFTRNPKHGITMYAIAKLARMIGVDQIHTGTAVGKMAGDYEEVKRINDFLLSKWEHIREVFPVASGGLHPGLMPELIRLFGKDLVIQAGGGVMGHPDGPRAGAKALRDAIDAALEGVDLEEKAKSSPELKKALDKWGYLKPK.

Catalysis depends on lysine 155, which acts as the Proton acceptor. A substrate-binding site is contributed by lysine 157. Residues lysine 181, aspartate 183, and glutamate 184 each coordinate Mg(2+). The residue at position 181 (lysine 181) is an N6-carboxylysine. Histidine 273 functions as the Proton acceptor in the catalytic mechanism. Substrate contacts are provided by residues arginine 274, histidine 306, 343–345, and 365–368; these read SGG and QAGG.

The protein belongs to the RuBisCO large chain family. Type III subfamily. Homodimer or homodecamer. In contrast to form I RuBisCO, the form III RuBisCO is composed solely of large subunits. The cofactor is Mg(2+).

The catalysed reaction is 2 (2R)-3-phosphoglycerate + 2 H(+) = D-ribulose 1,5-bisphosphate + CO2 + H2O. The enzyme catalyses D-ribulose 1,5-bisphosphate + O2 = 2-phosphoglycolate + (2R)-3-phosphoglycerate + 2 H(+). Its function is as follows. Catalyzes the addition of molecular CO(2) and H(2)O to ribulose 1,5-bisphosphate (RuBP), generating two molecules of 3-phosphoglycerate (3-PGA). Functions in an archaeal AMP degradation pathway, together with AMP phosphorylase and R15P isomerase. The chain is Ribulose bisphosphate carboxylase from Pyrococcus furiosus (strain ATCC 43587 / DSM 3638 / JCM 8422 / Vc1).